The sequence spans 121 residues: Apoptin (121 aa).

Disordered regions lie at residues 1–28 and 57–121; these read MNALQEDTPPGPSTVFRPPTSSRPLETP and LRSA…CIRL. Positions 58–70 are enriched in polar residues; the sequence is RSATADNSESTGF. Positions 88–102 are enriched in basic and acidic residues; the sequence is RSCDPSEYRVSELKE.

The protein belongs to the gyrovirus apoptin family.

Its subcellular location is the host nucleus. In terms of biological role, may act as transcriptional regulator. Induces apoptosis in infected cells. Element of infectious replication cycle. This is Apoptin (VP3) from Gallus gallus (Chicken).